The chain runs to 1208 residues: Putative protease AXL1 (1208 aa).

His68 is a Zn(2+) binding site. The active-site Proton acceptor is Glu71. Zn(2+) is bound by residues His72 and Glu156. Ser262 carries the post-translational modification Phosphoserine.

The protein belongs to the peptidase M16 family. In terms of assembly, interacts with BUD5. Zn(2+) serves as cofactor.

The protein resides in the bud neck. Probable protease. Involved in axial budding. This is Putative protease AXL1 (AXL1) from Saccharomyces cerevisiae (strain ATCC 204508 / S288c) (Baker's yeast).